Consider the following 206-residue polypeptide: Imidazole glycerol phosphate synthase subunit HisH (206 aa).

The Glutamine amidotransferase type-1 domain maps to 1–206; sequence MIVIIDYGMG…LRILKNFGDM (206 aa). Residue Cys79 is the Nucleophile of the active site. Residues His188 and Glu190 contribute to the active site.

Heterodimer of HisH and HisF.

It is found in the cytoplasm. The enzyme catalyses 5-[(5-phospho-1-deoxy-D-ribulos-1-ylimino)methylamino]-1-(5-phospho-beta-D-ribosyl)imidazole-4-carboxamide + L-glutamine = D-erythro-1-(imidazol-4-yl)glycerol 3-phosphate + 5-amino-1-(5-phospho-beta-D-ribosyl)imidazole-4-carboxamide + L-glutamate + H(+). It carries out the reaction L-glutamine + H2O = L-glutamate + NH4(+). Its pathway is amino-acid biosynthesis; L-histidine biosynthesis; L-histidine from 5-phospho-alpha-D-ribose 1-diphosphate: step 5/9. IGPS catalyzes the conversion of PRFAR and glutamine to IGP, AICAR and glutamate. The HisH subunit catalyzes the hydrolysis of glutamine to glutamate and ammonia as part of the synthesis of IGP and AICAR. The resulting ammonia molecule is channeled to the active site of HisF. This is Imidazole glycerol phosphate synthase subunit HisH from Syntrophotalea carbinolica (strain DSM 2380 / NBRC 103641 / GraBd1) (Pelobacter carbinolicus).